Here is a 100-residue protein sequence, read N- to C-terminus: Urease subunit gamma (100 aa).

This sequence belongs to the urease gamma subunit family. In terms of assembly, heterotrimer of UreA (gamma), UreB (beta) and UreC (alpha) subunits. Three heterotrimers associate to form the active enzyme.

Its subcellular location is the cytoplasm. The enzyme catalyses urea + 2 H2O + H(+) = hydrogencarbonate + 2 NH4(+). Its pathway is nitrogen metabolism; urea degradation; CO(2) and NH(3) from urea (urease route): step 1/1. The sequence is that of Urease subunit gamma from Nitrosococcus oceani (strain ATCC 19707 / BCRC 17464 / JCM 30415 / NCIMB 11848 / C-107).